The chain runs to 430 residues: Signal recognition particle receptor FtsY (430 aa).

The tract at residues 75 to 95 (DTGELPAVGDDATVPRDSPRH) is disordered. GTP-binding positions include 238 to 245 (GVNGTGKT), 320 to 324 (DTAGR), and 382 to 385 (TKLD).

The protein belongs to the GTP-binding SRP family. FtsY subfamily. As to quaternary structure, part of the signal recognition particle protein translocation system, which is composed of SRP and FtsY.

The protein resides in the cell membrane. Its subcellular location is the cytoplasm. The catalysed reaction is GTP + H2O = GDP + phosphate + H(+). Its function is as follows. Involved in targeting and insertion of nascent membrane proteins into the cytoplasmic membrane. Acts as a receptor for the complex formed by the signal recognition particle (SRP) and the ribosome-nascent chain (RNC). This Mycobacterium leprae (strain TN) protein is Signal recognition particle receptor FtsY.